The primary structure comprises 224 residues: Response regulator protein GraR (224 aa).

Residues glutamine 2–tyrosine 115 enclose the Response regulatory domain. 4-aspartylphosphate is present on aspartate 51. A DNA-binding region (ompR/PhoB-type) is located at residues lysine 126–glutamate 224. Threonine 128, threonine 130, and threonine 149 each carry phosphothreonine.

As to quaternary structure, interacts with GraX. In terms of processing, phosphorylated by GraS. Phosphorylated by Stk1; phosphorylation increases the DNA-binding activity of GraR.

The protein resides in the cytoplasm. Member of the two-component regulatory system GraR/GraS involved in resistance against cationic antimicrobial peptides (CAMPs). Upon phosphorylation by GraS, functions as a transcription regulator by direct binding to promoter regions of target genes such as adhesins, exoproteins, transporters, toxins, and proteins involved in cell wall synthesis. Down-regulates the expression of many genes involved in RNA and amino acid synthesis or glycolysis. This chain is Response regulator protein GraR (graR), found in Staphylococcus aureus (strain MRSA252).